Consider the following 563-residue polypeptide: Putative ABC transporter ATP-binding protein SCO2324 (563 aa).

Positions isoleucine 2–leucine 243 constitute an ABC transporter 1 domain. ATP is bound at residue glycine 36–serine 43. The disordered stretch occupies residues alanine 271–alanine 317. Residues histidine 278–arginine 293 are compositionally biased toward pro residues. An ABC transporter 2 domain is found at alanine 317–lysine 545. Glycine 349–serine 356 contributes to the ATP binding site.

This sequence belongs to the ABC transporter superfamily.

It is found in the cell membrane. Its function is as follows. Probably part of an ABC transporter complex. Responsible for energy coupling to the transport system. The sequence is that of Putative ABC transporter ATP-binding protein SCO2324 from Streptomyces coelicolor (strain ATCC BAA-471 / A3(2) / M145).